Reading from the N-terminus, the 315-residue chain is N-acetyl-gamma-glutamyl-phosphate reductase (315 aa).

Cys117 is an active-site residue.

It belongs to the NAGSA dehydrogenase family. Type 2 subfamily.

Its subcellular location is the cytoplasm. The enzyme catalyses N-acetyl-L-glutamate 5-semialdehyde + phosphate + NADP(+) = N-acetyl-L-glutamyl 5-phosphate + NADPH + H(+). The protein operates within amino-acid biosynthesis; L-arginine biosynthesis; N(2)-acetyl-L-ornithine from L-glutamate: step 3/4. Catalyzes the NADPH-dependent reduction of N-acetyl-5-glutamyl phosphate to yield N-acetyl-L-glutamate 5-semialdehyde. The chain is N-acetyl-gamma-glutamyl-phosphate reductase from Burkholderia ambifaria (strain ATCC BAA-244 / DSM 16087 / CCUG 44356 / LMG 19182 / AMMD) (Burkholderia cepacia (strain AMMD)).